The primary structure comprises 265 residues: DNA repair protein RecO (265 aa).

This sequence belongs to the RecO family.

Its function is as follows. Involved in DNA repair and RecF pathway recombination. This is DNA repair protein RecO from Mycolicibacterium paratuberculosis (strain ATCC BAA-968 / K-10) (Mycobacterium paratuberculosis).